A 405-amino-acid chain; its full sequence is Tyrosine-protein phosphatase non-receptor type eak-6 (405 aa).

Residues 30–309 form the Tyrosine-protein phosphatase domain; it reads INQRINIIAD…SFIYDIIIKY (280 aa). Residue cysteine 248 is the Phosphocysteine intermediate of the active site.

This sequence belongs to the protein-tyrosine phosphatase family. As to expression, expressed in the 2 embryonic head hypodermal cells XXXL/R.

It localises to the cytoplasm. The protein localises to the cell membrane. It carries out the reaction O-phospho-L-tyrosyl-[protein] + H2O = L-tyrosyl-[protein] + phosphate. Putative phosphatase which, together with eak-4 and sdf-9, negatively regulates dauer larva formation downstream of insulin-like receptor daf-2 and in parallel of age-1, pdk-1 and akt-1. The chain is Tyrosine-protein phosphatase non-receptor type eak-6 from Caenorhabditis elegans.